A 200-amino-acid chain; its full sequence is Ras-related protein Rab-10 (200 aa).

Positions 18, 19, 20, 21, 22, 23, 24, 35, 36, 40, and 41 each coordinate GTP. Residue T23 coordinates Mg(2+). 2 short sequence motifs (switch) span residues D32–F46 and D64–G81. Residues T41 and D64 each contribute to the Mg(2+) site. Positions 67, 122, 123, 125, 126, 152, 153, and 154 each coordinate GTP. Residues R181–S200 are disordered. 2 S-geranylgeranyl cysteine lipidation sites follow: C198 and C199.

The protein belongs to the small GTPase superfamily. Rab family. Mg(2+) is required as a cofactor.

Its subcellular location is the cytoplasmic vesicle membrane. It is found in the golgi apparatus. The protein resides in the trans-Golgi network membrane. It localises to the endosome membrane. The protein localises to the recycling endosome membrane. Its subcellular location is the cytoplasmic vesicle. It is found in the phagosome membrane. The protein resides in the cell projection. It localises to the cilium. The protein localises to the endoplasmic reticulum membrane. It catalyses the reaction GTP + H2O = GDP + phosphate + H(+). With respect to regulation, regulated by guanine nucleotide exchange factors (GEFs) which promote the exchange of bound GDP for free GTP. Regulated by GTPase activating proteins (GAPs) which increase the GTP hydrolysis activity. Inhibited by GDP dissociation inhibitors (GDIs) which prevent Rab-GDP dissociation. Functionally, the small GTPases Rab are key regulators of intracellular membrane trafficking, from the formation of transport vesicles to their fusion with membranes. Rabs cycle between an inactive GDP-bound form and an active GTP-bound form that is able to recruit to membranes different set of downstream effectors directly responsible for vesicle formation, movement, tethering and fusion. That Rab is mainly involved in the biosynthetic transport of proteins from the Golgi to the plasma membrane. Also plays a specific role in asymmetric protein transport to the plasma membrane within the polarized neuron and epithelial cells. In neurons, it is involved in axonogenesis through regulation of vesicular membrane trafficking toward the axonal plasma membrane while in epithelial cells, it regulates transport from the Golgi to the basolateral membrane. Moreover, may play a role in the basolateral recycling pathway and in phagosome maturation. Finally, may play a role in endoplasmic reticulum dynamics and morphology controlling tubulation along microtubules and tubules fusion. May participate in the export of neosynthesized proteins through a Rab-dependent endosomal export route. The protein is Ras-related protein Rab-10 of Diplobatis ommata (Ocellated electric ray).